A 153-amino-acid chain; its full sequence is Superoxide dismutase [Cu-Zn] (153 aa).

His46, His48, and His63 together coordinate Cu cation. The cysteines at positions 57 and 146 are disulfide-linked. Residues 61–80 form a disordered region; it reads GPHFNPFGKEHGAPEDENRH. Positions 63, 71, 80, and 83 each coordinate Zn(2+). Over residues 68-80 the composition is skewed to basic and acidic residues; that stretch reads GKEHGAPEDENRH. A Cu cation-binding site is contributed by His120. The segment covering 124 to 136 has biased composition (basic and acidic residues); that stretch reads DDLGRSEHPESKK. A disordered region spans residues 124–143; that stretch reads DDLGRSEHPESKKTGNAGAR. A substrate-binding site is contributed by Arg143.

This sequence belongs to the Cu-Zn superoxide dismutase family. As to quaternary structure, homodimer. Requires Cu cation as cofactor. The cofactor is Zn(2+).

It is found in the cytoplasm. The enzyme catalyses 2 superoxide + 2 H(+) = H2O2 + O2. Functionally, destroys radicals which are normally produced within the cells and which are toxic to biological systems. The sequence is that of Superoxide dismutase [Cu-Zn] (sodC) from Aspergillus flavus.